The primary structure comprises 330 residues: Aspartate--ammonia ligase (330 aa).

It belongs to the class-II aminoacyl-tRNA synthetase family. AsnA subfamily.

It is found in the cytoplasm. The enzyme catalyses L-aspartate + NH4(+) + ATP = L-asparagine + AMP + diphosphate + H(+). It functions in the pathway amino-acid biosynthesis; L-asparagine biosynthesis; L-asparagine from L-aspartate (ammonia route): step 1/1. The protein is Aspartate--ammonia ligase of Streptococcus agalactiae serotype Ia (strain ATCC 27591 / A909 / CDC SS700).